The chain runs to 62 residues: UPF0434 protein Tola_2233 (62 aa).

It belongs to the UPF0434 family.

This chain is UPF0434 protein Tola_2233, found in Tolumonas auensis (strain DSM 9187 / NBRC 110442 / TA 4).